A 463-amino-acid polypeptide reads, in one-letter code: Putative sodium-coupled neutral amino acid transporter 11 (463 aa).

Residues 1 to 27 (MGYPGQRPVIPPQSHRDDRETLVSEHK) form a disordered region. The span at 14-25 (SHRDDRETLVSE) shows a compositional bias: basic and acidic residues. The next 11 helical transmembrane spans lie at 38–58 (AVFNVVNSIIGSGIIGLPYSM), 65–85 (LGILLLFWVSYVTDFSLILLI), 105–125 (GFPGYLLLSVLQFLYPFIAMI), 150–170 (LLIGRHLIIVLSTVVFTLPLS), 178–198 (LGKISLISTVLTTLILGIVVA), 225–245 (VGVMSFAFICHHNCFLVYGSL), 256–276 (IIHVSTLISVFISILFATCGY), 298–320 (VTFGRFCYGVTVILTYPIECFVT), 336–356 (VCHIIVTVVIITVATLVSLLI), 358–378 (CLGIVLELNGVLCAAPLIFII), and 397–417 (IMSCVMLPIGAVVMAVGFVMA). N-linked (GlcNAc...) asparagine glycans are attached at residues Asn437, Asn442, and Asn458.

Belongs to the amino acid/polyamine transporter 2 family.

It is found in the membrane. Its function is as follows. Putative sodium-dependent amino acid/proton antiporter. The sequence is that of Putative sodium-coupled neutral amino acid transporter 11 (SLC38A11) from Bos taurus (Bovine).